The chain runs to 2062 residues: Ankyrin repeat domain-containing protein 12 (2062 aa).

Disordered stretches follow at residues 1-119 (MPKS…GNKK) and 145-188 (ARDN…GETP). A compositionally biased stretch (polar residues) spans 9–20 (PIQSENSDSDSN). Composition is skewed to basic and acidic residues over residues 41–57 (PKIE…EKSS) and 100–117 (YSEK…EAGN). The span at 145–172 (ARDNSPDSTPNHPSQTTPAQKKTPSSSS) shows a compositional bias: polar residues. Ser-149 carries the phosphoserine modification. Positions 173-187 (RQKDKVNKRNERGET) are enriched in basic and acidic residues. ANK repeat units lie at residues 184–213 (RGET…NVNV), 217–246 (AGWT…DVNT), and 250–280 (DDDT…PFQA). 8 disordered regions span residues 301-338 (KREV…TEKD), 409-501 (KSFK…TRIT), 538-577 (ISTG…MSLQ), 609-683 (QKDF…DSAK), 727-788 (EKNI…FTSL), 812-1073 (EKHI…LVND), 1097-1227 (KHKE…RPPV), and 1328-1350 (EESN…KPEV). Over residues 306–318 (LSDDDESYTDSEE) the composition is skewed to acidic residues. 2 stretches are compositionally biased toward polar residues: residues 319-328 (AQSVNPSSVD) and 437-454 (KKIS…NSDM). The segment covering 455-467 (QTKKEYVVSGEHK) has biased composition (basic and acidic residues). A compositionally biased stretch (basic residues) spans 468–480 (QKGKVKRKLKNQN). Positions 481–498 (KNKENQELKQEKEGKENT) are enriched in basic and acidic residues. A Phosphoserine modification is found at Ser-543. Residues 565-575 (TCLSPGSSEMS) show a composition bias toward polar residues. Basic and acidic residues-rich tracts occupy residues 609 to 631 (QKDF…DHSP), 639 to 649 (TLKKMDKEGKT), 658 to 683 (KERE…DSAK), 727 to 784 (EKNI…KDSE), 812 to 969 (EKHI…DKES), 977 to 1037 (HIQE…KDKI), 1061 to 1072 (KDTRPKEKRLVN), and 1103 to 1157 (KQKE…KQPK). Phosphoserine is present on Ser-630. Ser-861 bears the Phosphoserine mark. Residues 1161–1189 (SNRSQSVDTKNVMTLGKSSFVSDNSLNRS) show a composition bias toward polar residues. Over residues 1200 to 1213 (SSRSVSMISVASSE) the composition is skewed to low complexity. A compositionally biased stretch (polar residues) spans 1328–1344 (EESNQGSLLTVPGDTSP). Phosphoserine is present on Ser-1401. Disordered stretches follow at residues 1721-1744 (NAED…NTMA) and 1756-1795 (LLSE…VPQP). The segment covering 1729–1744 (NQIPQRMTRNKANTMA) has biased composition (polar residues).

Interacts with the PAS region of the p160 coactivators.

Its subcellular location is the nucleus. May recruit HDACs to the p160 coactivators/nuclear receptor complex to inhibit ligand-dependent transactivation. The sequence is that of Ankyrin repeat domain-containing protein 12 (ANKRD12) from Homo sapiens (Human).